A 115-amino-acid chain; its full sequence is UPF0738 protein SE_0694 (115 aa).

This sequence belongs to the UPF0738 family.

In Staphylococcus epidermidis (strain ATCC 12228 / FDA PCI 1200), this protein is UPF0738 protein SE_0694.